Consider the following 161-residue polypeptide: MAPTQSQSKATTQWSLTRLAQQVRPHPTLLLLIRSNPMGPHSAWSWLLPLVQSNPMSLRQYATALQSFVLLLGTTGCPRELFLDLYRFIPTLTRTLLTSLGCGPGGAVVLRSGYRSLVLACSLGASLLLSYHQGLIPRPSGTQACCLTLSLMLASLSQFLS.

The protein belongs to the sapovirus VP3 family.

This is an uncharacterized protein from Sapporo virus (strain Human/United Kingdom/Manchester/1993) (Hu/SV/Man/1993/UK).